A 2532-amino-acid polypeptide reads, in one-letter code: Lovastatin diketide synthase lovF (2532 aa).

The region spanning 10–430 (PAPIAMVGMG…GANAHAIVEQ (421 aa)) is the Ketosynthase family 3 (KS3) domain. Active-site for beta-ketoacyl synthase activity residues include Cys-183, His-318, and His-353. Residues 545 to 870 (VFTGQGAQWF…PYLSCLSRGK (326 aa)) are malonyl-CoA:ACP transacylase (MAT) domain. Ser-635 functions as the For malonyltransferase activity in the catalytic mechanism. The tract at residues 941–1078 (HDLIGLQEPL…GLVRAEMDQP (138 aa)) is N-terminal hotdog fold. Positions 941 to 1246 (HDLIGLQEPL…LEGLVFQSLG (306 aa)) are dehydratase (DH) domain. The PKS/mFAS DH domain maps to 941–1251 (HDLIGLQEPL…FQSLGASLGT (311 aa)). The Proton acceptor; for dehydratase activity role is filled by His-973. The segment at 1075–1094 (MDQPPSSLSNQQRIDPRPWS) is disordered. A compositionally biased stretch (polar residues) spans 1078-1087 (PPSSLSNQQR). The C-terminal hotdog fold stretch occupies residues 1092-1251 (PWSRKTAPQE…FQSLGASLGT (160 aa)). Asp-1159 serves as the catalytic Proton donor; for dehydratase activity. The methyltransferase (CMet) domain stretch occupies residues 1423-1607 (ELVRLCCHKN…ARDCDSHEFY (185 aa)). The segment at 1825–2144 (GLLDSLHFTK…SGQHVGKIVV (320 aa)) is enoylreductase (ER) domain. Residues 2168-2340 (SYLVAGGLGG…AVTIDLGMVQ (173 aa)) are ketoreductase (KR) domain. The 78-residue stretch at 2453-2530 (ESIAVIMEAM…KVAEVVLQRY (78 aa)) folds into the Carrier domain. Position 2490 is an O-(pantetheine 4'-phosphoryl)serine (Ser-2490).

In terms of assembly, interacts with LovD. The cofactor is pantetheine 4'-phosphate.

It catalyses the reaction holo-[2-methylbutanoate polyketide synthase] + 2 malonyl-CoA + S-adenosyl-L-methionine + 2 NADPH + 3 H(+) = (S)-2-methylbutanoyl-[2-methylbutanoate polyketide synthase] + S-adenosyl-L-homocysteine + 2 CO2 + 2 NADP(+) + 2 CoA + H2O. It participates in polyketide biosynthesis; lovastatin biosynthesis. In terms of biological role, lovastatin diketide synthase; part of the gene cluster that mediates the biosynthesis of lovastatin (also known as mevinolin, mevacor or monacolin K), a hypolipidemic inhibitor of (3S)-hydroxymethylglutaryl-coenzyme A (HMG-CoA) reductase (HMGR). The first step in the biosynthesis of lovastatin is the production of dihydromonacolin L acid by the lovastatin nonaketide synthase lovB and the trans-acting enoyl reductase lovC via condensation of one acetyl-CoA unit and 8 malonyl-CoA units. Dihydromonacolin L acid is released from lovB by the thioesterase lovG. Next, dihydromonacolin L acid is oxidized by the dihydromonacolin L monooxygenase lovA twice to form monacolin J acid. The 2-methylbutyrate moiety of lovastatin is synthesized by the lovastatin diketide synthase lovF via condensation of one acetyl-CoA unit and one malonyl-CoA unit. Finally, the covalent attachment of this moiety to monacolin J acid is catalyzed by the transesterase lovD to yield lovastatin. LovD has broad substrate specificity and can also convert monacolin J to simvastatin using alpha-dimethylbutanoyl-S-methyl-3-mercaptopropionate (DMB-S-MMP) as the thioester acyl donor, and can also catalyze the reverse reaction and function as hydrolase in vitro. LovD has much higher activity with LovF-bound 2-methylbutanoate than with free diketide substrates. This chain is Lovastatin diketide synthase lovF, found in Aspergillus terreus.